A 261-amino-acid polypeptide reads, in one-letter code: Global transcriptional regulator CodY (261 aa).

The GAF domain stretch occupies residues 1–159; it reads MANLLDKTRK…ASTVVGLQLL (159 aa). Residues 207–226 constitute a DNA-binding region (H-T-H motif); the sequence is ASVIADRIGITRSVIVNALR.

This sequence belongs to the CodY family.

Its subcellular location is the cytoplasm. DNA-binding global transcriptional regulator which is involved in the adaptive response to starvation and acts by directly or indirectly controlling the expression of numerous genes in response to nutrient availability. During rapid exponential growth, CodY is highly active and represses genes whose products allow adaptation to nutrient depletion. The sequence is that of Global transcriptional regulator CodY from Streptococcus thermophilus (strain CNRZ 1066).